We begin with the raw amino-acid sequence, 110 residues long: Large ribosomal subunit protein uL22 (110 aa).

This sequence belongs to the universal ribosomal protein uL22 family. As to quaternary structure, part of the 50S ribosomal subunit.

Its function is as follows. This protein binds specifically to 23S rRNA; its binding is stimulated by other ribosomal proteins, e.g. L4, L17, and L20. It is important during the early stages of 50S assembly. It makes multiple contacts with different domains of the 23S rRNA in the assembled 50S subunit and ribosome. In terms of biological role, the globular domain of the protein is located near the polypeptide exit tunnel on the outside of the subunit, while an extended beta-hairpin is found that lines the wall of the exit tunnel in the center of the 70S ribosome. In Exiguobacterium sibiricum (strain DSM 17290 / CCUG 55495 / CIP 109462 / JCM 13490 / 255-15), this protein is Large ribosomal subunit protein uL22.